A 642-amino-acid polypeptide reads, in one-letter code: Threonine--tRNA ligase (642 aa).

Positions 1–61 (MPVIRFYDGS…REDAFIEFVD (61 aa)) constitute a TGS domain. A catalytic region spans residues 243–534 (DHRKIGKFLQ…LIEECSGNLP (292 aa)). Zn(2+) contacts are provided by Cys-334, His-385, and His-511.

Belongs to the class-II aminoacyl-tRNA synthetase family. As to quaternary structure, homodimer. The cofactor is Zn(2+).

The protein resides in the cytoplasm. It carries out the reaction tRNA(Thr) + L-threonine + ATP = L-threonyl-tRNA(Thr) + AMP + diphosphate + H(+). Catalyzes the attachment of threonine to tRNA(Thr) in a two-step reaction: L-threonine is first activated by ATP to form Thr-AMP and then transferred to the acceptor end of tRNA(Thr). Also edits incorrectly charged L-seryl-tRNA(Thr). The protein is Threonine--tRNA ligase of Buchnera aphidicola subsp. Acyrthosiphon pisum (strain 5A).